The following is a 479-amino-acid chain: MKLEKKKGIGAKRRGKKSSIDHDPFLEEETEKRRKFNYDDDDDIESVESEEEGKVGEEVEDEFAHETVGEKRKRLAEDTLNRIEEAKQREHEEDNEEDDDFRDSLVAKTLMQEQLEKSGRVRRANALRVQDLQSSDKFRVIVKHQHSVTGVALSDDDSRGFSVSKDGTILHWDVSSGKSDEYKWPSDEVLKSHGLKFQESWYTRHNKQSLALAVSSDGRYLATGGVDCHVHLWDIRTREHVQAFTGHCGIVSSLCFREGTAELFSGSYDGTLSIWNAEHRTYIESCFGHQSELLSIDALGRERVLSVGRDRTMQLYKVPESTRLIYRASESNFECCCFVNSDEFLSGSDNGSIALWSILKKKPVFIVNNAHHVIADHDSVNHNCTPACSWVSSVAVCRGSELAASGAGNGCVRLWGVESGSSAIQPLYELPLPGFVNSLAFAKSGRFLIAGVGQEPRLGRWGCLKSAQNGVAIHPLRLS.

Residues 1 to 73 are disordered; that stretch reads MKLEKKKGIG…AHETVGEKRK (73 aa). A compositionally biased stretch (basic residues) spans 8–17; it reads GIGAKRRGKK. Basic and acidic residues predominate over residues 18–38; that stretch reads SSIDHDPFLEEETEKRRKFNY. The span at 39–51 shows a compositional bias: acidic residues; that stretch reads DDDDDIESVESEE. Residues 52 to 73 are compositionally biased toward basic and acidic residues; it reads EGKVGEEVEDEFAHETVGEKRK. 7 WD repeats span residues 143 to 182, 204 to 243, 246 to 285, 288 to 326, 328 to 366, 386 to 425, and 431 to 471; these read KHQHSVTGVALSDDDSRGFSVSKDGTILHWDVSSGKSDEY, RHNKQSLALAVSSDGRYLATGGVDCHVHLWDIRTREHVQA, GHCGIVSSLCFREGTAELFSGSYDGTLSIWNAEHRTYIES, GHQSELLSIDALGRERVLSVGRDRTMQLYKVPESTRLIY, ASESNFECCCFVNSDEFLSGSDNGSIALWSILKKKPVFI, PACSWVSSVAVCRGSELAASGAGNGCVRLWGVESGSSAIQ, and PLPG…QNGV.

The protein belongs to the WD repeat RRP9 family.

The protein resides in the nucleus. Its subcellular location is the nucleolus. Component of a nucleolar small nuclear ribonucleoprotein particle (snoRNP) thought to participate in the processing and modification of pre-ribosomal RNA. Essential for embryogenesis. May function during late embryogenesis. The sequence is that of U3 snoRNP-associated protein-like EMB2271 from Arabidopsis thaliana (Mouse-ear cress).